The primary structure comprises 219 residues: Elongation factor Ts (219 aa).

The interval 82-85 (TDFV) is involved in Mg(2+) ion dislocation from EF-Tu.

Belongs to the EF-Ts family.

Its subcellular location is the cytoplasm. Functionally, associates with the EF-Tu.GDP complex and induces the exchange of GDP to GTP. It remains bound to the aminoacyl-tRNA.EF-Tu.GTP complex up to the GTP hydrolysis stage on the ribosome. The protein is Elongation factor Ts of Anaeromyxobacter dehalogenans (strain 2CP-1 / ATCC BAA-258).